Here is a 1538-residue protein sequence, read N- to C-terminus: Phenolphthiocerol/phthiocerol polyketide synthase subunit B (1538 aa).

The Ketosynthase family 3 (KS3) domain occupies Ala-33–Gln-455. Residues Cys-205, His-340, and His-377 each act as for beta-ketoacyl synthase activity in the active site. The acyltransferase stretch occupies residues Asp-553–His-882. Ser-649 (for malonyltransferase activity) is an active-site residue. Ser-1153 to Leu-1196 provides a ligand contact to NADP(+). Positions Ser-1153 to Ser-1328 are beta-ketoacyl reductase. The 76-residue stretch at Asp-1423–Leu-1498 folds into the Carrier domain. Ser-1458 is subject to O-(pantetheine 4'-phosphoryl)serine.

NADP(+) serves as cofactor. Pantetheine 4'-phosphate is required as a cofactor.

The enzyme catalyses icosanoyl-[(phenol)carboxyphthiodiolenone synthase] + 2 (S)-methylmalonyl-CoA + 3 malonyl-CoA + 5 NADPH + 10 H(+) = C32-carboxyphthiodiolenone-[(phenol)carboxyphthiodiolenone synthase] + 5 CO2 + 5 NADP(+) + 5 CoA + 2 H2O. The catalysed reaction is docosanoyl-[(phenol)carboxyphthiodiolenone synthase] + 2 (S)-methylmalonyl-CoA + 3 malonyl-CoA + 5 NADPH + 10 H(+) = C34-carboxyphthiodiolenone-[(phenol)carboxyphthiodiolenone synthase] + 5 CO2 + 5 NADP(+) + 5 CoA + 2 H2O. It catalyses the reaction 17-(4-hydroxyphenyl)heptadecanoyl-[(phenol)carboxyphthiodiolenone synthase] + 2 (S)-methylmalonyl-CoA + 3 malonyl-CoA + 5 NADPH + 10 H(+) = C35-(phenol)carboxyphthiodiolenone-[(phenol)carboxyphthiodiolenone synthase] + 5 CO2 + 5 NADP(+) + 5 CoA + 2 H2O. It carries out the reaction 19-(4-hydroxyphenyl)nonadecanoyl-[(phenol)carboxyphthiodiolenone synthase] + 2 (S)-methylmalonyl-CoA + 3 malonyl-CoA + 5 NADPH + 10 H(+) = C37-(phenol)carboxyphthiodiolenone-[(phenol)carboxyphthiodiolenone synthase] + 5 CO2 + 5 NADP(+) + 5 CoA + 2 H2O. Its pathway is lipid metabolism; fatty acid biosynthesis. Its function is as follows. Part of the PpsABCDE complex involved in the biosynthesis of the lipid core common to phthiocerols and phenolphthiocerols by successive additions of malonyl-CoA or methylmalonyl-CoA extender units. PpsA can accept as substrate the activated forms of either icosanoyl (C20), docosanoyl (C22) or lignoceroyl (C24) groups from FadD26, or a (4-hydroxyphenyl)-C17 or (4-hydroxyphenyl)-C19 fatty acyl from FadD29. PpsA initiates the biosynthesis and extends its substrate using a malonyl-CoA extender unit. The PpsB and PpsC proteins add the second and third malonyl-CoA extender units. PpsD adds an (R)-methylmalonyl unit and PpsE adds a second (R)-methylmalonyl unit. The incorporation of the methylmalonyl units results in formation of two branched methyl groups in the elongated product. In Mycobacterium bovis (strain ATCC BAA-935 / AF2122/97), this protein is Phenolphthiocerol/phthiocerol polyketide synthase subunit B (ppsB).